The sequence spans 144 residues: 3-hydroxyacyl-[acyl-carrier-protein] dehydratase FabZ (144 aa).

Histidine 47 is an active-site residue.

Belongs to the thioester dehydratase family. FabZ subfamily.

It is found in the cytoplasm. The enzyme catalyses a (3R)-hydroxyacyl-[ACP] = a (2E)-enoyl-[ACP] + H2O. In terms of biological role, involved in unsaturated fatty acids biosynthesis. Catalyzes the dehydration of short chain beta-hydroxyacyl-ACPs and long chain saturated and unsaturated beta-hydroxyacyl-ACPs. In Alcanivorax borkumensis (strain ATCC 700651 / DSM 11573 / NCIMB 13689 / SK2), this protein is 3-hydroxyacyl-[acyl-carrier-protein] dehydratase FabZ.